The following is a 384-amino-acid chain: Conidiophore development protein hymA (384 aa).

Over residues 362 to 374 the composition is skewed to basic and acidic residues; sequence EPIEPSRSAREPS. The disordered stretch occupies residues 362–384; the sequence is EPIEPSRSAREPSRSTANTTTVA.

The protein belongs to the Mo25 family.

It is found in the cytoplasm. Its function is as follows. Required for conidiophore development. The polypeptide is Conidiophore development protein hymA (hymA) (Emericella nidulans (strain FGSC A4 / ATCC 38163 / CBS 112.46 / NRRL 194 / M139) (Aspergillus nidulans)).